The chain runs to 164 residues: Thiol peroxidase (164 aa).

The Thioredoxin domain maps to 18-164; the sequence is KKVGDSAPDF…YEAVLSHLNK (147 aa). Cysteine 60 functions as the Cysteine sulfenic acid (-SOH) intermediate in the catalytic mechanism. A disulfide bridge links cysteine 60 with cysteine 94.

Belongs to the peroxiredoxin family. Tpx subfamily. As to quaternary structure, homodimer.

It carries out the reaction a hydroperoxide + [thioredoxin]-dithiol = an alcohol + [thioredoxin]-disulfide + H2O. Its function is as follows. Thiol-specific peroxidase that catalyzes the reduction of hydrogen peroxide and organic hydroperoxides to water and alcohols, respectively. Plays a role in cell protection against oxidative stress by detoxifying peroxides. The polypeptide is Thiol peroxidase (Oceanobacillus iheyensis (strain DSM 14371 / CIP 107618 / JCM 11309 / KCTC 3954 / HTE831)).